A 608-amino-acid polypeptide reads, in one-letter code: Aspartate--tRNA(Asp/Asn) ligase (608 aa).

Glu-187 contributes to the L-aspartate binding site. An aspartate region spans residues 211 to 214 (QQFK). 2 residues coordinate L-aspartate: Arg-233 and His-461. 233-235 (RDE) contacts ATP. Glu-495 contacts ATP. Arg-502 provides a ligand contact to L-aspartate. 547 to 550 (GLDR) is an ATP binding site.

The protein belongs to the class-II aminoacyl-tRNA synthetase family. Type 1 subfamily. Homodimer.

It localises to the cytoplasm. The catalysed reaction is tRNA(Asx) + L-aspartate + ATP = L-aspartyl-tRNA(Asx) + AMP + diphosphate. Aspartyl-tRNA synthetase with relaxed tRNA specificity since it is able to aspartylate not only its cognate tRNA(Asp) but also tRNA(Asn). Reaction proceeds in two steps: L-aspartate is first activated by ATP to form Asp-AMP and then transferred to the acceptor end of tRNA(Asp/Asn). This is Aspartate--tRNA(Asp/Asn) ligase from Prosthecochloris aestuarii (strain DSM 271 / SK 413).